Here is a 1493-residue protein sequence, read N- to C-terminus: ABC transporter C family member 7 (1493 aa).

Transmembrane regions (helical) follow at residues 21 to 41 (FPMF…GSCV), 70 to 90 (VVIC…LSCF), 102 to 122 (LMIL…SFYI), 140 to 160 (VWWV…IALY), 165 to 185 (LVSV…LFLC), 309 to 329 (ILLS…APYL), 343 to 360 (YSNQ…AKLV), 423 to 443 (WYMH…LILY), 448 to 468 (LGSI…IPLA), and 535 to 555 (SVLW…CMLL). The ABC transmembrane type-1 1 domain maps to 309-590 (ILLSTLFAFV…LPDTISMIVQ (282 aa)). Positions 624 to 847 (VEVSNGAFSW…GTDFMELVGA (224 aa)) constitute an ABC transporter 1 domain. Residue 659–666 (GTVGSGKS) coordinates ATP. The tract at residues 863-898 (ASAQSTTSKESKVSNDEEKQEEDLPSPKGQLVQEEE) is disordered. S888 carries the phosphoserine modification. 6 consecutive transmembrane segments (helical) span residues 915-935 (LAYG…FQVL), 959-979 (GSTL…CILV), 1038-1055 (FSNL…IGVM), 1059-1081 (AWQV…QYYI), 1153-1173 (LSTV…EGVI), and 1177-1197 (FAGL…TLIW). One can recognise an ABC transmembrane type-1 2 domain in the interval 922 to 1204 (VPIILVVQIL…LIWTLCDLEN (283 aa)). Positions 1241–1475 (ITICNLQVRY…KSSSFSKLVA (235 aa)) constitute an ABC transporter 2 domain. 1275–1282 (GRTGCGKS) contributes to the ATP binding site.

The protein belongs to the ABC transporter superfamily. ABCC family. Conjugate transporter (TC 3.A.1.208) subfamily. In terms of tissue distribution, ubiquitous.

Its subcellular location is the membrane. It catalyses the reaction ATP + H2O + xenobioticSide 1 = ADP + phosphate + xenobioticSide 2.. Pump for glutathione S-conjugates. The polypeptide is ABC transporter C family member 7 (ABCC7) (Arabidopsis thaliana (Mouse-ear cress)).